The sequence spans 191 residues: Thymidine kinase (191 aa).

Residues 9–16 and 85–88 contribute to the ATP site; these read GTMNSGKT and DEAQ. Glutamate 86 (proton acceptor) is an active-site residue. 4 residues coordinate Zn(2+): cysteine 143, cysteine 146, cysteine 180, and histidine 183.

Belongs to the thymidine kinase family. In terms of assembly, homotetramer.

Its subcellular location is the cytoplasm. It catalyses the reaction thymidine + ATP = dTMP + ADP + H(+). In Streptococcus gordonii (strain Challis / ATCC 35105 / BCRC 15272 / CH1 / DL1 / V288), this protein is Thymidine kinase.